Consider the following 272-residue polypeptide: WIMGHMVNDLSLVDEFLNDGANSLELDVEFSSSGTAQRTHHGFPCDCFRYCTNSEKFSTYLDYIRQLTTPGNSKFRSRLILLVMDLKLNPLSSSAAYNAGADVALNLLNHYWQRGESEARAYIVLSLSTIDGAEFISGFKSTMEKEGFADKYYDKIGWDFSGNEDLQQIRDVLENYGIREHIWQGDGITNCLPRGDSRLKEALNLRYSPSYIYADKVYTWSIDEENSIKHALWLGVDGVMTNHPERVIEVLGKSKYSDKFRLATYDDNPWEK.

His-5 is a catalytic residue. The Mg(2+) site is built by Glu-25 and Asp-27. His-41 (nucleophile) is an active-site residue. Cystine bridges form between Cys-45/Cys-51 and Cys-47/Cys-191. Asp-85 contacts Mg(2+).

The protein belongs to the arthropod phospholipase D family. Class II subfamily. The cofactor is Mg(2+). As to expression, expressed by the venom gland.

It localises to the secreted. It catalyses the reaction an N-(acyl)-sphingosylphosphocholine = an N-(acyl)-sphingosyl-1,3-cyclic phosphate + choline. The enzyme catalyses an N-(acyl)-sphingosylphosphoethanolamine = an N-(acyl)-sphingosyl-1,3-cyclic phosphate + ethanolamine. The catalysed reaction is a 1-acyl-sn-glycero-3-phosphocholine = a 1-acyl-sn-glycero-2,3-cyclic phosphate + choline. It carries out the reaction a 1-acyl-sn-glycero-3-phosphoethanolamine = a 1-acyl-sn-glycero-2,3-cyclic phosphate + ethanolamine. Dermonecrotic toxins cleave the phosphodiester linkage between the phosphate and headgroup of certain phospholipids (sphingolipid and lysolipid substrates), forming an alcohol (often choline) and a cyclic phosphate. This toxin acts on sphingomyelin (SM). It may also act on ceramide phosphoethanolamine (CPE), lysophosphatidylcholine (LPC) and lysophosphatidylethanolamine (LPE), but not on lysophosphatidylserine (LPS), and lysophosphatidylglycerol (LPG). It acts by transphosphatidylation, releasing exclusively cyclic phosphate products as second products. Induces dermonecrosis, hemolysis, increased vascular permeability, edema, inflammatory response, and platelet aggregation. In Sicarius peruensis (Six-eyed sand spider), this protein is Dermonecrotic toxin SpeSicTox-betaIB2b.